The primary structure comprises 952 residues: Respiratory burst oxidase homolog protein E (952 aa).

Over Met-1–Arg-392 the chain is Cytoplasmic. EF-hand-like stretches follow at residues Ser-211 to Asp-219 and Arg-245 to Glu-256. 2 consecutive EF-hand domains span residues Ser-268–Ala-303 and Gln-312–Tyr-347. Ca(2+) is bound by residues Asp-281, Asn-283, Asp-285, Lys-287, and Glu-292. Residues Ser-393–Glu-413 form a helical membrane-spanning segment. Residues Tyr-414 to Lys-475 lie on the Extracellular side of the membrane. The Ferric oxidoreductase domain occupies Lys-431–Ile-587. The helical transmembrane segment at Ile-476 to Asp-496 threads the bilayer. Over Phe-497–Gly-531 the chain is Cytoplasmic. A helical membrane pass occupies residues Ile-532 to Phe-552. Over Arg-553–Tyr-574 the chain is Extracellular. A helical transmembrane segment spans residues Thr-575 to Phe-595. The Cytoplasmic portion of the chain corresponds to Ala-596–Thr-603. A helical membrane pass occupies residues Thr-604–Leu-621. The Extracellular segment spans residues Arg-622–Arg-750. The FAD-binding FR-type domain occupies Ser-626 to Asp-748. Residues Ser-751–Leu-771 form a helical membrane-spanning segment. The Cytoplasmic portion of the chain corresponds to Lys-772–Phe-952.

It belongs to the RBOH (TC 5.B.1.3) family. In terms of assembly, monomer and homodimer. As to expression, expressed in roots, inflorescences, leaves and stems.

The protein resides in the membrane. In terms of biological role, calcium-dependent NADPH oxidase that generates superoxide. The sequence is that of Respiratory burst oxidase homolog protein E (RBOHE) from Arabidopsis thaliana (Mouse-ear cress).